The following is a 997-amino-acid chain: Translation initiation factor IF-2 (997 aa).

The segment at 101–406 is disordered; that stretch reads ELAAEQAAAR…SRNQHQDRRH (306 aa). 2 stretches are compositionally biased toward low complexity: residues 116-185 and 195-209; these read AEAV…QAEP and AAPA…EPAK. The span at 231 to 242 shows a compositional bias: polar residues; sequence TELTSQTPTPVA. Residues 256 to 280 are compositionally biased toward low complexity; the sequence is AEPAAAPKTTAKPGEIRRAAAPAAP. Residues 281-292 show a composition bias toward basic and acidic residues; it reads DRAREEARRAAE. Residues 385–394 are compositionally biased toward gly residues; sequence RAGGKGGRGG. Residues 498 to 665 enclose the tr-type G domain; the sequence is PRAPVVTVMG…NVLLQAEILE (168 aa). Residues 507 to 514 are G1; that stretch reads GHVDHGKT. Position 507-514 (507-514) interacts with GTP; sequence GHVDHGKT. A G2 region spans residues 532 to 536; the sequence is GITQH. Residues 553–556 form a G3 region; the sequence is DTPG. Residues 553 to 557 and 607 to 610 each bind GTP; these read DTPGH and NKID. Residues 607–610 are G4; the sequence is NKID. A G5 region spans residues 643-645; the sequence is SAK.

It belongs to the TRAFAC class translation factor GTPase superfamily. Classic translation factor GTPase family. IF-2 subfamily.

It is found in the cytoplasm. In terms of biological role, one of the essential components for the initiation of protein synthesis. Protects formylmethionyl-tRNA from spontaneous hydrolysis and promotes its binding to the 30S ribosomal subunits. Also involved in the hydrolysis of GTP during the formation of the 70S ribosomal complex. This chain is Translation initiation factor IF-2, found in Bordetella pertussis (strain Tohama I / ATCC BAA-589 / NCTC 13251).